The following is a 198-amino-acid chain: ATP-dependent Clp protease proteolytic subunit 1 (198 aa).

S96 functions as the Nucleophile in the catalytic mechanism. The active site involves H121.

It belongs to the peptidase S14 family. Fourteen ClpP subunits assemble into 2 heptameric rings which stack back to back to give a disk-like structure with a central cavity, resembling the structure of eukaryotic proteasomes.

The protein localises to the cytoplasm. The catalysed reaction is Hydrolysis of proteins to small peptides in the presence of ATP and magnesium. alpha-casein is the usual test substrate. In the absence of ATP, only oligopeptides shorter than five residues are hydrolyzed (such as succinyl-Leu-Tyr-|-NHMec, and Leu-Tyr-Leu-|-Tyr-Trp, in which cleavage of the -Tyr-|-Leu- and -Tyr-|-Trp bonds also occurs).. Functionally, cleaves peptides in various proteins in a process that requires ATP hydrolysis. Has a chymotrypsin-like activity. Plays a major role in the degradation of misfolded proteins. This chain is ATP-dependent Clp protease proteolytic subunit 1, found in Synechocystis sp. (strain ATCC 27184 / PCC 6803 / Kazusa).